The following is a 470-amino-acid chain: Cysteine--tRNA ligase (470 aa).

Zn(2+) is bound at residue cysteine 27. The 'HIGH' region motif lies at 29 to 39; the sequence is PTVYNHIHIGN. Residues cysteine 207, histidine 232, and glutamate 236 each contribute to the Zn(2+) site. Positions 265 to 269 match the 'KMSKS' region motif; that stretch reads KMAKS. Residue lysine 268 participates in ATP binding.

Belongs to the class-I aminoacyl-tRNA synthetase family. In terms of assembly, monomer. Zn(2+) is required as a cofactor.

Its subcellular location is the cytoplasm. The catalysed reaction is tRNA(Cys) + L-cysteine + ATP = L-cysteinyl-tRNA(Cys) + AMP + diphosphate. This is Cysteine--tRNA ligase from Rubrobacter xylanophilus (strain DSM 9941 / JCM 11954 / NBRC 16129 / PRD-1).